A 309-amino-acid chain; its full sequence is Olfactory receptor 1A2 (309 aa).

The Extracellular portion of the chain corresponds to 1 to 25 (MKKENQSFNLDFILLGVTSQQEQNN). N-linked (GlcNAc...) asparagine glycosylation is present at asparagine 5. Residues 26 to 49 (VFFVIFLCIYPITLTGNLLIILAI) form a helical membrane-spanning segment. Residues 50 to 57 (CADIRLHN) are Cytoplasmic-facing. The helical transmembrane segment at 58–79 (PMYFLLANLSLVDIIFSSVTIP) threads the bilayer. Residues 80-100 (KVLANHLLGSKFISFGGCLMQ) are Extracellular-facing. Cysteine 97 and cysteine 189 are oxidised to a cystine. Residues 101–120 (MYFMIALAKADSYTLAAMAY) traverse the membrane as a helical segment. Residues 121–139 (DRAVAISCPLHYTTIMSPR) lie on the Cytoplasmic side of the membrane. A helical membrane pass occupies residues 140–158 (SCILLIAGSWVIGNTSALP). The Extracellular portion of the chain corresponds to 159-195 (HTLLTASLSFCGNQEVANFYCDIMPLLKLSCSDVHFN). A helical membrane pass occupies residues 196 to 218 (VKMMYLGVGVFSLPLLCIIVSYV). Residues 219–235 (QVFSTVFQVPSTKSLFK) lie on the Cytoplasmic side of the membrane. The helical transmembrane segment at 236 to 258 (AFCTCGSHLTVVFLYYGTTMGMY) threads the bilayer. At 259-270 (FRPLTSYSPKDA) the chain is on the extracellular side. The chain crosses the membrane as a helical span at residues 271-290 (VITVMYVAVTPALNPFIYSL). Residues 291–309 (RNWDMKAALQKLFSKRISS) are Cytoplasmic-facing.

This sequence belongs to the G-protein coupled receptor 1 family.

The protein localises to the cell membrane. In terms of biological role, odorant receptor. This is Olfactory receptor 1A2 (OR1A2) from Homo sapiens (Human).